The following is a 579-amino-acid chain: 2-isopropylmalate synthase (579 aa).

The Pyruvate carboxyltransferase domain maps to 33–308 (PRWLSTDLRD…DPGIDFSDIN (276 aa)). Residues D42, H247, H249, and N283 each contribute to the Mg(2+) site. The regulatory domain stretch occupies residues 450 to 579 (SSDLPVPLAS…IVAPLVAAGR (130 aa)).

The protein belongs to the alpha-IPM synthase/homocitrate synthase family. LeuA type 2 subfamily. Homodimer. Mg(2+) is required as a cofactor.

The protein localises to the cytoplasm. The enzyme catalyses 3-methyl-2-oxobutanoate + acetyl-CoA + H2O = (2S)-2-isopropylmalate + CoA + H(+). Its pathway is amino-acid biosynthesis; L-leucine biosynthesis; L-leucine from 3-methyl-2-oxobutanoate: step 1/4. In terms of biological role, catalyzes the condensation of the acetyl group of acetyl-CoA with 3-methyl-2-oxobutanoate (2-ketoisovalerate) to form 3-carboxy-3-hydroxy-4-methylpentanoate (2-isopropylmalate). In Streptosporangium roseum (strain ATCC 12428 / DSM 43021 / JCM 3005 / KCTC 9067 / NCIMB 10171 / NRRL 2505 / NI 9100), this protein is 2-isopropylmalate synthase.